The sequence spans 385 residues: UPF0496 protein At3g28290 (385 aa).

Residues 138 to 214 (KDKENDVGKK…IEMEISSRKK (77 aa)) are a coiled coil. 2 helical membrane passes run 217 to 237 (IISNVLFIGAFVAVAVGSMVL) and 242 to 262 (VGAGVGVAGLLSLPLIAIGWV). Positions 267-294 (ILENKIQAREKQEEALKKAHRIANEMDK) form a coiled coil.

The protein belongs to the UPF0496 family. As to expression, widely expressed.

The protein resides in the membrane. This chain is UPF0496 protein At3g28290, found in Arabidopsis thaliana (Mouse-ear cress).